The chain runs to 165 residues: MASTYSFDVVSDFDRQELVNTLDQVRRDVGNRYDLKDSNTEIDLEETELVITTASDMTLQAVEDVLRTKATKRNLSLKIFDFQTPETAGGNRVRQVVKLRKGLSQEIAKKLSKMVRDELKKVTVAIQGESVRITGKSKDDLQAAIQLVKGKEDELDVPLQFENYR.

It belongs to the YajQ family.

Functionally, nucleotide-binding protein. This Synechococcus sp. (strain CC9605) protein is Nucleotide-binding protein Syncc9605_0652.